We begin with the raw amino-acid sequence, 522 residues long: MPNNKFFVKSSKASLRWLGATVLLTLYALPSWAFSIDDVAKQAQALAAKGYEAPKSNVPSQFREMKFADYQQIQFNHDKALWHDLPTPFKIEFYHQGMYFDQAVKINEVTATAVNEVKYSSDMFNFGSVNHDPDAVKDLGFAGFKILYPINQLDKNDEIVSMLGASYFRVIGKGQVYGLSARGLAIDTALASGEEFPRFREFWIERPKANDKHLVLYALLDSPRATGAYRFVIYPGRDTSVDVQSRVYLRDKVGKLGLAPLTSMFLFGPNQPAMTMNFRPALHDSDGLSIHAGNGEWIWRPLNNPRHLSVSTFQVENPRGFGLLQRGRDFFQYQDLDDRYDLRSSGWVEPRGDWGKGHVELVEIPTNDETNDNIVAFWTPEKLPDVGQPLELAYRLHFSRDEDKIHSADFAYVKQTLRSAGDVKQTNLTRQPDGTTAFQVDFVGQPLKELDQAAPVTSQISVGDNADVVENSVRFNPVTHGWRLTLRLKVKDTKQPTEMRAALVNGDKTLTETWSYLLPANE.

The signal sequence occupies residues Met-1 to Ala-33.

Belongs to the OpgD/OpgG family.

The protein resides in the periplasm. The protein operates within glycan metabolism; osmoregulated periplasmic glucan (OPG) biosynthesis. Involved in the biosynthesis of osmoregulated periplasmic glucans (OPGs). The sequence is that of Glucans biosynthesis protein G from Sodalis glossinidius (strain morsitans).